A 658-amino-acid chain; its full sequence is ATP-dependent zinc metalloprotease FtsH 4 (658 aa).

The disordered stretch occupies residues 1–22 (MREPTNRQGSPGPGEPRPPAQG). Over 1-28 (MREPTNRQGSPGPGEPRPPAQGRPRFPT) the chain is Cytoplasmic. A helical transmembrane segment spans residues 29 to 49 (WILWVALLALALWNVYTFFWP). The Extracellular segment spans residues 50–149 (SSGARLNIPY…TVKIDQAGGS (100 aa)). The interval 95 to 114 (QVLSPGDPVPPGTSPNEIRT) is disordered. The chain crosses the membrane as a helical span at residues 150–170 (VWPSLLATIVPLFLFIGLMVY). Residues 171–658 (LGRSMSRGQQ…AAPAAAADSV (488 aa)) are Cytoplasmic-facing. Residue 243 to 250 (GPPGTGKT) coordinates ATP. Zn(2+) is bound at residue His464. The active site involves Glu465. Zn(2+)-binding residues include His468 and Asp540.

This sequence in the central section; belongs to the AAA ATPase family. It in the C-terminal section; belongs to the peptidase M41 family. Homohexamer. Zn(2+) serves as cofactor.

The protein localises to the cell membrane. Acts as a processive, ATP-dependent zinc metallopeptidase for both cytoplasmic and membrane proteins. Plays a role in the quality control of integral membrane proteins. This Sphaerobacter thermophilus (strain ATCC 49802 / DSM 20745 / KCCM 41009 / NCIMB 13125 / S 6022) protein is ATP-dependent zinc metalloprotease FtsH 4 (ftsh4).